Reading from the N-terminus, the 243-residue chain is DUF724 domain-containing protein 5 (243 aa).

A compositionally biased stretch (basic and acidic residues) spans 1–24; the sequence is MREKHYSEDNSRKRKRGELEHNSD. Residues 1 to 51 are disordered; that stretch reads MREKHYSEDNSRKRKRGELEHNSDLNETVLPSDWTPDPVKNFAADDDDEET. One can recognise a DUF724 domain in the interval 59-243; it reads VLPFVKKSPV…DLGVELEDVE (185 aa). A coiled-coil region spans residues 174-223; the sequence is KEMKDESSKKHKAEQEFGEMERKILEVKNKVLELQKQEAALEKQKDATYE.

Homodimer. As to expression, expressed in leaves, flowers and siliques.

The protein resides in the nucleus. May be involved in the polar growth of plant cells via transportation of RNAs. The protein is DUF724 domain-containing protein 5 of Arabidopsis thaliana (Mouse-ear cress).